Reading from the N-terminus, the 358-residue chain is Reverse gyrase subunit A (358 aa).

The 351-residue stretch at 1 to 351 (MNATLRIRNR…KLYLELERVV (351 aa)) folds into the Topo IA-type catalytic domain. Tyrosine 78 functions as the O-(5'-phospho-DNA)-tyrosine intermediate in the catalytic mechanism.

It belongs to the type IA topoisomerase family. Heterodimer of an RgyrA and RgyrB subunit. The topoisomerase domain is shared between the two subunits. It depends on Mg(2+) as a cofactor.

The protein resides in the cytoplasm. Modifies the topological state of DNA by introducing positive supercoils in an ATP-dependent process; dATP also allows positive supercoiling. Increases the linking number in steps of +1. Only this subunit binds DNA, in isolation it does not hydrolyze ATP. Hydrolyzes ATP only in the presence of DNA. Transiently cleaves a single DNA strand and remains covalently bound to the 5' DNA end probably through a tyrosine residue. It changes linking number in steps of one, and nicks DNA preferentially at 5'-CNNN | 3'-sites with a strong preference for 4 pyrimidine residues. There are about 1000 heterodimers per cell. May be involved in rewinding the DNA strands in the regions of the chromosome that have opened up to allow transcription or replication. Functionally, reverse gyrase activity is reconstituted after incubation at 80 degrees Celsius for 5 minutes, positive supercoiling requires ATP and Mg(2+). In the presence of ATP it binds and nicks substrate but does not make closed product. The polypeptide is Reverse gyrase subunit A (Methanopyrus kandleri (strain AV19 / DSM 6324 / JCM 9639 / NBRC 100938)).